The chain runs to 177 residues: Calcineurin subunit B (177 aa).

EF-hand domains are found at residues 25-60, 62-92, 94-129, and 135-170; these read KEIKKLYKRFKKLDKDGNGTISKDEFLMIPELAVNP, VKRVISIFDENGDGSVNFKEFIAALSVFNAQ, DKQRKLEFAFKVYDIDGDGYISNGELFTVLKMMVGN, and QLQQIVDKTILEADEDGDGKISFEEFAKTLSHQDLE. Ca(2+) contacts are provided by Asp-38, Asp-40, Asn-42, Thr-44, Glu-49, Asp-70, Asn-72, Asp-74, Ser-76, Glu-81, Asp-107, Asp-109, Asp-111, Tyr-113, Glu-118, Asp-148, Asp-150, Asp-152, Lys-154, and Glu-159.

Belongs to the calcineurin regulatory subunit family. In terms of assembly, composed of a catalytic subunit (A) and a regulatory subunit (B).

Functionally, regulatory subunit of calcineurin, a calcium-dependent, calmodulin stimulated protein phosphatase. Confers calcium sensitivity. The polypeptide is Calcineurin subunit B (CNB1) (Naegleria gruberi (Amoeba)).